The following is a 371-amino-acid chain: Phospho-N-acetylmuramoyl-pentapeptide-transferase (371 aa).

10 helical membrane passes run 25 to 45 (YLTFRTGMSMLTAYVVAVAMG), 79 to 99 (TMGGFMILAGLFVGSLLFADL), 104 to 124 (VWVVLGITGSFGVLGFMDDYA), 139 to 159 (KLIAQFIISILAAVVLIIFAP), 179 to 199 (LVINLGWFYVAFAAITIAGFS), 210 to 230 (GLAIVPVMFAASTFGLIAYLV), 247 to 267 (VGELAVVCGAIIGGGMGFLWY), 274 to 294 (IFMGDTGSLALGGALGSIAVC), 299 to 319 (LVLGIVGGLFVAEALSVMIQV), and 348 to 368 (TVVIRFWIVAMMLSFVGLATL).

The protein belongs to the glycosyltransferase 4 family. MraY subfamily. Mg(2+) is required as a cofactor.

It localises to the cell inner membrane. The enzyme catalyses UDP-N-acetyl-alpha-D-muramoyl-L-alanyl-gamma-D-glutamyl-meso-2,6-diaminopimeloyl-D-alanyl-D-alanine + di-trans,octa-cis-undecaprenyl phosphate = di-trans,octa-cis-undecaprenyl diphospho-N-acetyl-alpha-D-muramoyl-L-alanyl-D-glutamyl-meso-2,6-diaminopimeloyl-D-alanyl-D-alanine + UMP. It participates in cell wall biogenesis; peptidoglycan biosynthesis. In terms of biological role, catalyzes the initial step of the lipid cycle reactions in the biosynthesis of the cell wall peptidoglycan: transfers peptidoglycan precursor phospho-MurNAc-pentapeptide from UDP-MurNAc-pentapeptide onto the lipid carrier undecaprenyl phosphate, yielding undecaprenyl-pyrophosphoryl-MurNAc-pentapeptide, known as lipid I. This Caulobacter sp. (strain K31) protein is Phospho-N-acetylmuramoyl-pentapeptide-transferase.